The primary structure comprises 570 residues: Proline--tRNA ligase (570 aa).

The protein belongs to the class-II aminoacyl-tRNA synthetase family. ProS type 1 subfamily. Homodimer.

The protein resides in the cytoplasm. It carries out the reaction tRNA(Pro) + L-proline + ATP = L-prolyl-tRNA(Pro) + AMP + diphosphate. Its function is as follows. Catalyzes the attachment of proline to tRNA(Pro) in a two-step reaction: proline is first activated by ATP to form Pro-AMP and then transferred to the acceptor end of tRNA(Pro). As ProRS can inadvertently accommodate and process non-cognate amino acids such as alanine and cysteine, to avoid such errors it has two additional distinct editing activities against alanine. One activity is designated as 'pretransfer' editing and involves the tRNA(Pro)-independent hydrolysis of activated Ala-AMP. The other activity is designated 'posttransfer' editing and involves deacylation of mischarged Ala-tRNA(Pro). The misacylated Cys-tRNA(Pro) is not edited by ProRS. The chain is Proline--tRNA ligase from Neisseria meningitidis serogroup B (strain ATCC BAA-335 / MC58).